A 65-amino-acid chain; its full sequence is uncharacterized protein (65 aa).

Residues 1-22 (MKFIKLFTFLVYLFVTLTNVFA) form the signal peptide.

This is an uncharacterized protein from Invertebrate iridescent virus 6 (IIV-6).